The sequence spans 64 residues: Large ribosomal subunit protein bL35 (64 aa).

Positions Met1–His31 are disordered.

Belongs to the bacterial ribosomal protein bL35 family.

This Paenarthrobacter aurescens (strain TC1) protein is Large ribosomal subunit protein bL35.